Consider the following 186-residue polypeptide: UPF0301 protein PM1869 (186 aa).

The protein belongs to the UPF0301 (AlgH) family.

The protein is UPF0301 protein PM1869 of Pasteurella multocida (strain Pm70).